We begin with the raw amino-acid sequence, 798 residues long: Heterogeneous nuclear ribonucleoprotein U (798 aa).

N-acetylserine is present on Ser2. Ser4 carries the post-translational modification Phosphoserine. In terms of domain architecture, SAP spans 8-42 (VKKLKVSELKEELKKRRLSDKGLKADLMDRLQAAL). 2 positions are modified to N6-acetyllysine: Lys17 and Lys21. The interval 41–229 (ALDNEAGGRP…VKRPREDHGR (189 aa)) is disordered. A Phosphoserine modification is found at Ser58. Composition is skewed to low complexity over residues 71-80 (AGLEQEAAAG) and 103-113 (ENGAAGAADAG). 2 stretches are compositionally biased toward acidic residues: residues 114–128 (AMEE…ENGD) and 134–147 (EGED…EGAG). Over residues 153-169 (GEQQSQPPAAAQQASQQ) the composition is skewed to low complexity. The residue at position 179 (Lys179) is an N6-acetyllysine. At Ser180 the chain carries ADP-ribosylserine. A compositionally biased stretch (low complexity) spans 192–203 (APPGARQGQQQA). Residues 207 to 229 (GKTEQKAGDKKRGVKRPREDHGR) show a composition bias toward basic and acidic residues. Residue Arg229 is modified to Citrulline. Position 239 is an N6-acetyllysine; alternate (Lys239). A Glycyl lysine isopeptide (Lys-Gly) (interchain with G-Cter in SUMO1); alternate cross-link involves residue Lys239. Lys239 is covalently cross-linked (Glycyl lysine isopeptide (Lys-Gly) (interchain with G-Cter in SUMO2); alternate). Tyr240 is modified (phosphotyrosine). 2 positions are modified to phosphoserine: Ser241 and Ser245. The 197-residue stretch at 242–438 (RAKSPQPPVE…VEFNFGQKEK (197 aa)) folds into the B30.2/SPRY domain. Residue Thr260 is modified to Phosphothreonine. Lys326 carries the N6-acetyllysine modification. The tract at residues 462–646 (PKGPEEKKDC…QKLLEQYKEE (185 aa)) is ATPase domain. Lys469 is covalently cross-linked (Glycyl lysine isopeptide (Lys-Gly) (interchain with G-Cter in SUMO2)). Position 478–485 (478–485 (GLPGAGKT)) interacts with ATP. Lys490 and Lys498 each carry N6-acetyllysine; alternate. Residues Lys490 and Lys498 each participate in a glycyl lysine isopeptide (Lys-Gly) (interchain with G-Cter in SUMO2); alternate cross-link. Phosphothreonine is present on Thr506. A Glycyl lysine isopeptide (Lys-Gly) (interchain with G-Cter in SUMO2) cross-link involves residue Lys510. An N6-acetyllysine modification is found at Lys525. An N6-acetyllysine; alternate modification is found at Lys539. A Glycyl lysine isopeptide (Lys-Gly) (interchain with G-Cter in SUMO2); alternate cross-link involves residue Lys539. A Glycyl lysine isopeptide (Lys-Gly) (interchain with G-Cter in SUMO2) cross-link involves residue Lys548. Residue Thr556 is modified to Phosphothreonine. Glycyl lysine isopeptide (Lys-Gly) (interchain with G-Cter in SUMO2) cross-links involve residues Lys583 and Lys600. The segment at 585–600 (EDYKQRTQKKAEVEGK) is actin-binding. An N6-acetyllysine; alternate modification is found at Lys609. A Glycyl lysine isopeptide (Lys-Gly) (interchain with G-Cter in SUMO2); alternate cross-link involves residue Lys609. A coiled-coil region spans residues 624-651 (DEITYVELQKEEAQKLLEQYKEESKKAL). Glycyl lysine isopeptide (Lys-Gly) (interchain with G-Cter in SUMO2) cross-links involve residues Lys638 and Lys644. Over residues 645–657 (EESKKALPPEKKQ) the composition is skewed to basic and acidic residues. Residues 645-727 (EESKKALPPE…GSGGIGYPYP (83 aa)) form a disordered region. Residue Arg676 is modified to Omega-N-methylarginine. Residues 684 to 702 (GGFNMRGGNFRGGAPGNRG) show a composition bias toward gly residues. An RNA-binding RGG-box region spans residues 688–713 (MRGGNFRGGAPGNRGGYNRRGNMPQR). Asymmetric dimethylarginine is present on residues Arg689, Arg694, and Arg701. An asymmetric dimethylarginine; alternate mark is found at Arg707 and Arg713. Arg707 and Arg713 each carry omega-N-methylarginine; alternate. A compositionally biased stretch (gly residues) spans 713–723 (RGGGGGSGGIG). Asymmetric dimethylarginine occurs at positions 728 and 735. The segment at 743-772 (NYNRGGMPNRGNYNQNFRGRGNNRGYKNQS) is disordered. Lys787 is modified (N6-acetyllysine; alternate). Lys787 participates in a covalent cross-link: Glycyl lysine isopeptide (Lys-Gly) (interchain with G-Cter in SUMO2); alternate.

Oligomer (via ATPase domain and RNA-binding RGG-box region); oligomerization occurs upon ATP-binding in a chromatin-associated RNAs (caRNAs)- and transcription-dependent manner and is required for chromatin decompaction. ATP hydrolysis is required to cycle from an oligomeric to monomeric state to compact chromatin. Component of the coding region determinant (CRD)-mediated complex, composed of DHX9, HNRNPU, IGF2BP1, SYNCRIP and YBX1. Identified in the spliceosome C complex. Identified in a IGF2BP1-dependent mRNP granule complex containing untranslated mRNAs. Associates with heterogeneous nuclear ribonucleoprotein (hnRNP) particles. Associates (via middle region) with the C-terminal domain (CTD) RNA polymerase II (Pol II) holoenzyme; this association occurs in a RNA-independent manner. Associates (via middle region) with the core-TFIIH basal transcription factor complex; this association inhibits the CTD phosphorylation of RNA polymerase II holoenzyme by down-regulating TFIIH kinase activity. Associates with the telomerase holoenzyme complex. Associates with spindle microtubules (MTs) in a TPX2-dependent manner. Interacts (via C-terminus) with actin; this interaction is direct and mediates association with the phosphorylated CTD of RNA polymerase II and is disrupted in presence of the long non-coding H19 RNA. Interacts with AURKA. Interacts (via C-terminus) with CBX5; this interaction is, at least in part, RNA-dependent. Interacts with CR2. Interacts with CRY1. Interacts (via C-terminus) with EP300; this interaction enhances DNA-binding to nuclear scaffold/matrix attachment region (S/MAR) elements. Interacts with ERBB4. Interacts with GEMIN5. Interacts with IGF2BP1. Interacts with IGF2BP2 and IGF2BP3. Interacts with NCL; this interaction occurs during mitosis. Interacts (via C-terminus) with NR3C1 (via C-terminus). Interacts with PLK1; this interaction induces phosphorylation of HNRNPU at Ser-58 in mitosis. Interacts with POU3F4. Interacts with SMARCA4; this interaction occurs in embryonic stem cells and stimulates global Pol II-mediated transcription. Interacts (via C-terminus) with TOP2A; this interaction protects the topoisomerase TOP2A from degradation and positively regulates the relaxation of supercoiled DNA by TOP2A in a RNA-dependent manner. Interacts with TPX2; this interaction recruits HNRNPU to spindle microtubules (MTs). Interacts with UBQLN2. Interacts (via RNA-binding RGG-box region) with ZBTB7B; the interaction facilitates the recruitment of long non-coding RNA Blnc1 by ZBTB7B. Interacts with ERCC6. Post-translationally, cleaved at Asp-94 by CASP3 during T-cell apoptosis, resulting in a loss of DNA- and chromatin-binding activities. Extensively phosphorylated. Phosphorylated on Ser-58 by PLK1 and dephosphorylated by protein phosphatase 2A (PP2A) in mitosis. In terms of processing, arg-707 and Arg-713 are dimethylated, probably to asymmetric dimethylarginine. Post-translationally, citrullinated by PADI4.

The protein resides in the nucleus. It localises to the nucleus matrix. It is found in the chromosome. Its subcellular location is the nucleus speckle. The protein localises to the cytoplasm. The protein resides in the cytoskeleton. It localises to the microtubule organizing center. It is found in the centrosome. Its subcellular location is the centromere. The protein localises to the kinetochore. The protein resides in the spindle. It localises to the spindle pole. It is found in the midbody. Its subcellular location is the cell surface. The protein localises to the cytoplasmic granule. In terms of biological role, DNA- and RNA-binding protein involved in several cellular processes such as nuclear chromatin organization, telomere-length regulation, transcription, mRNA alternative splicing and stability, Xist-mediated transcriptional silencing and mitotic cell progression. Plays a role in the regulation of interphase large-scale gene-rich chromatin organization through chromatin-associated RNAs (caRNAs) in a transcription-dependent manner, and thereby maintains genomic stability. Required for the localization of the long non-coding Xist RNA on the inactive chromosome X (Xi) and the subsequent initiation and maintenance of X-linked transcriptional gene silencing during X-inactivation. Required for the topoisomerase TOP2A protein stability and activity in a RNA-dependent manner. Plays a role as a RNA polymerase II (Pol II) holoenzyme transcription regulator. Promotes transcription initiation by direct association with the core-TFIIH basal transcription factor complex for the assembly of a functional pre-initiation complex with Pol II in a actin-dependent manner. Blocks Pol II transcription elongation activity by inhibiting the C-terminal domain (CTD) phosphorylation of Pol II and dissociates from Pol II pre-initiation complex prior to productive transcription elongation. Positively regulates CBX5-induced transcriptional gene silencing and retention of CBX5 in the nucleus. Negatively regulates glucocorticoid-mediated transcriptional activation. Key regulator of transcription initiation and elongation in embryonic stem cells upon leukemia inhibitory factor (LIF) signaling. Involved in the long non-coding RNA H19-mediated Pol II transcriptional repression. Participates in the circadian regulation of the core clock component BMAL1 transcription. Plays a role in the regulation of telomere length. Plays a role as a global pre-mRNA alternative splicing modulator by regulating U2 small nuclear ribonucleoprotein (snRNP) biogenesis. Plays a role in mRNA stability. Component of the CRD-mediated complex that promotes MYC mRNA stabilization. Enhances the expression of specific genes, such as tumor necrosis factor TNFA, by regulating mRNA stability, possibly through binding to the 3'-untranslated region (UTR). Plays a role in mitotic cell cycle regulation. Involved in the formation of stable mitotic spindle microtubules (MTs) attachment to kinetochore, spindle organization and chromosome congression. Phosphorylation at Ser-58 by PLK1 is required for chromosome alignement and segregation and progression through mitosis. Also contributes to the targeting of AURKA to mitotic spindle MTs. Binds to double- and single-stranded DNA and RNA, poly(A), poly(C) and poly(G) oligoribonucleotides. Binds to chromatin-associated RNAs (caRNAs). Associates with chromatin to scaffold/matrix attachment region (S/MAR) elements in DNA. Associates with chromatin in a chromatin-associated RNAs (caRNAs)-dependent manner. Binds to the Xist RNA. Binds the long non-coding H19 RNA. Binds to SMN1/2 pre-mRNAs at G/U-rich regions. Binds to small nuclear RNAs (snRNAs). Binds to the 3'-UTR of TNFA mRNA. Binds (via RNA-binding RGG-box region) to the long non-coding Xist RNA; this binding is direct and bridges the Xist RNA and the inactive chromosome X (Xi). Also negatively regulates embryonic stem cell differentiation upon LIF signaling. Required for embryonic development. Binds to brown fat long non-coding RNA 1 (Blnc1); facilitates the recruitment of Blnc1 by ZBTB7B required to drive brown and beige fat development and thermogenesis. This is Heterogeneous nuclear ribonucleoprotein U from Rattus norvegicus (Rat).